The chain runs to 123 residues: Methanesulfonate monooxygenase ferredoxin subunit (123 aa).

One can recognise a Rieske domain in the interval 4-99 (TYLCDAADVA…LKEEDGKLLA (96 aa)). Residues C43, H45, C63, and H66 each coordinate [2Fe-2S] cluster.

It belongs to the bacterial ring-hydroxylating dioxygenase ferredoxin component family. In terms of assembly, the MSA monooxygenase system consists of 4 proteins: the 2 subunits of the hydroxylase component (MsmA and MsmB), a ferredoxin (MsmC) and a ferredoxin reductase (MsmD). The ferredoxin component is dimeric. [2Fe-2S] cluster serves as cofactor.

It localises to the cytoplasm. The enzyme catalyses methanesulfonate + NADH + O2 = sulfite + formaldehyde + NAD(+) + H2O. MSAMO is inhibited by metal chelators (such as bathophenanthroline, bathocuprione, neocuprione, alpha-alpha-dipyridil and sodium EDTA) and by sodium azide, sodium arsenate and potassium cyanide. In terms of biological role, methanesulfonate monooxygenase (MSAMO) mediates the primary degradation of methanesulfonic acid (MSA) to produce formaldehyd and inorganic sulfite by initial hydroxylation of the carbon atom prior to spontaneous cleavage of the unstable hydroxymethanesulfonic acid. MSAMO has a restricted substrate range that includes only the short-chain aliphatic sulfonates (methane- to butanesulfonate) and excludes all larger molecules, such as arylsulfonates and aromatic sulfonates. All MSAMO components are required for enzyme activity. This is Methanesulfonate monooxygenase ferredoxin subunit from Methylosulfonomonas methylovora.